Here is a 365-residue protein sequence, read N- to C-terminus: Eukaryotic translation initiation factor 3 subunit H (365 aa).

Residues 11–160 form the MPN domain; that stretch reads VKVEALVVMK…LRAFRLSPKF (150 aa).

Belongs to the eIF-3 subunit H family. In terms of assembly, component of the eukaryotic translation initiation factor 3 (eIF-3) complex.

The protein localises to the cytoplasm. Functionally, component of the eukaryotic translation initiation factor 3 (eIF-3) complex, which is involved in protein synthesis of a specialized repertoire of mRNAs and, together with other initiation factors, stimulates binding of mRNA and methionyl-tRNAi to the 40S ribosome. The eIF-3 complex specifically targets and initiates translation of a subset of mRNAs involved in cell proliferation. The protein is Eukaryotic translation initiation factor 3 subunit H of Aspergillus clavatus (strain ATCC 1007 / CBS 513.65 / DSM 816 / NCTC 3887 / NRRL 1 / QM 1276 / 107).